The primary structure comprises 86 residues: UPF0335 protein BruAb1_1737 (86 aa).

This sequence belongs to the UPF0335 family.

This chain is UPF0335 protein BruAb1_1737, found in Brucella abortus biovar 1 (strain 9-941).